The following is a 352-amino-acid chain: Mitochondrial adenine nucleotide transporter ADNT1 (352 aa).

Solcar repeat units lie at residues 36 to 123 (KSIC…ASNG), 139 to 227 (LTPL…LKDW), and 242 to 343 (LTVV…VKDV). Helical transmembrane passes span 41–61 (SLFA…PLER), 100–120 (GTNC…YEQA), 145–162 (LGAG…TYPM), 202–221 (GWLP…FSVY), 242–263 (LTVV…TIAY), and 324–340 (VKVV…YEMV).

Belongs to the mitochondrial carrier (TC 2.A.29) family. As to expression, expressed in seedling radicles and roots, vasculature of cotyledons, leaf primordia, leaves and sepals.

It is found in the mitochondrion inner membrane. With respect to regulation, inhibited by pyridoxal 5-phosphate, bathophenanthroline, mersalyl, p-hydroxymercuribenzoate and tannic acid. Functionally, mitochondrial adenylate carrier that catalyzes specifically the transport of ATP, ADP and AMP by a counter-exchange mechanism across the inner mitochondrial membrane. Substrate preference in reconstituted proteoliposomes is ATP &gt; AMP &gt; ADP. May play a role in oxidative phosphorylation and be important for the provision of energy required to support growth in heterotrophic tissues. This chain is Mitochondrial adenine nucleotide transporter ADNT1 (ADNT1), found in Arabidopsis thaliana (Mouse-ear cress).